A 453-amino-acid polypeptide reads, in one-letter code: UDP-glucosyltransferase avaP (453 aa).

This sequence belongs to the UDP-glycosyltransferase family.

The protein operates within secondary metabolite biosynthesis. Its function is as follows. UDP-glucosyltransferase; part of the cluster that mediates the biosynthesis of a highly modified cyclo-arginine-tryptophan dipeptide (cRW). The first step of the pathway is perfornmed by the arginine-containing cyclodipeptide synthase (RCPDS) avaA that acts as the scaffold-generating enzyme and is responsible for formation of the cyclo-Arg-Trp (cRW) diketopiperazine. AvaB then acts as a multifunctional flavoenzyme that is responsible for generating the cyclo-Arg-formylkynurenine DKP, which can be deformylated by avaC. AvaB then further catalyzes an additional N-oxidation followed by cyclization and dehydration. The next step is an N-acetylation of the guanidine group catalyzed by the arginine N-acetyltransferase avaD. The roles of the additional enzymes identified within the ava cluster still have to be determined. This is UDP-glucosyltransferase avaP from Aspergillus versicolor.